The primary structure comprises 457 residues: Argininosuccinate lyase (457 aa).

It belongs to the lyase 1 family. Argininosuccinate lyase subfamily.

The protein localises to the cytoplasm. It carries out the reaction 2-(N(omega)-L-arginino)succinate = fumarate + L-arginine. It functions in the pathway amino-acid biosynthesis; L-arginine biosynthesis; L-arginine from L-ornithine and carbamoyl phosphate: step 3/3. The protein is Argininosuccinate lyase of Cronobacter sakazakii (strain ATCC BAA-894) (Enterobacter sakazakii).